Consider the following 423-residue polypeptide: Lysosomal acid phosphatase (423 aa).

The N-terminal stretch at 1–30 (MAGKRSGWSRAALLQLLLGVNLVVMPPTQA) is a signal peptide. Residues 31–380 (RSLRFVTLLY…QVASGPADTE (350 aa)) lie on the Lumenal side of the membrane. His-42 (nucleophile) is an active-site residue. N-linked (GlcNAc...) asparagine glycans are attached at residues Asn-92, Asn-133, Asn-167, Asn-177, Asn-191, and Asn-267. Intrachain disulfides connect Cys-159-Cys-370, Cys-212-Cys-310, and Cys-345-Cys-349. The active-site Proton donor is Asp-287. 2 N-linked (GlcNAc...) asparagine glycosylation sites follow: Asn-322 and Asn-331. A helical transmembrane segment spans residues 381–401 (VIVALAVCGSILFLLIVLLLT). Over 402 to 423 (VLFRMQAQPPGYRHVADGEDHA) the chain is Cytoplasmic.

The protein belongs to the histidine acid phosphatase family. The membrane-bound form is converted to the soluble form by sequential proteolytic processing. First, the C-terminal cytoplasmic tail is removed. Cleavage by a lysosomal protease releases the soluble form in the lysosome lumen.

Its subcellular location is the lysosome membrane. It is found in the lysosome lumen. It carries out the reaction a phosphate monoester + H2O = an alcohol + phosphate. The protein is Lysosomal acid phosphatase (ACP2) of Pongo abelii (Sumatran orangutan).